The primary structure comprises 895 residues: Zinc finger protein 574 (895 aa).

3 C2H2-type zinc fingers span residues 16–38 (YVCSECNQLYGSLEEVLMHQNSH), 76–98 (YQCLECGQLLMSPSQLLEHQELH), and 126–148 (YECVDCKALFASQELWLNHRQTH). Ser164 carries the post-translational modification Phosphoserine. A C2H2-type 4 zinc finger spans residues 214–236 (YKCSECSQLFQLPADFLEHQATH). The disordered stretch occupies residues 239–301 (APVPESQEPA…RARRNNSGEA (63 aa)). Residues 247-257 (PALQQEVQASS) show a composition bias toward polar residues. The segment covering 274-287 (HSYELRNGEAIGRD) has biased composition (basic and acidic residues). Residue Ser298 is modified to Phosphoserine. 4 C2H2-type zinc fingers span residues 309–331 (LFCSACDQLFLSPHQLQQHLRSH), 336–358 (FKCPLCSRVFPSPSSLDQHLGDH), 364–386 (FLCVDCGLAFGTEALLLAHRRAH), and 392–413 (HSCPCGKTFVNLTKFLYHRRTH). The segment at 434–460 (FPEPAPAETGEPEAPEPPVSEETSAGP) is disordered. C2H2-type zinc fingers lie at residues 466–489 (YRCLLCSREFGKALQLTRHQRFVH), 495–517 (HKCSICGKMFKKKSHVRNHLRTH), 523–545 (FPCPDCSKPFNSPANLARHRLTH), 551–573 (YRCGDCGKAFTQSSTLRQHRLVH), 579–601 (YRCQECGVRFHRPYRLLMHRYHH), and 607–630 (YKCRECPRSFLLRRLLEVHQLVVH). The C2H2-type 15; degenerate zinc-finger motif lies at 636–659 (HRCPSCGAAFPSSLRLREHRCAAA). Residues 667 to 689 (FECGTCGKKVGSAARLQAHEAAH) form a C2H2-type 16 zinc finger. Residues 687-732 (AAHAAAGPGEVLAKEPPAPRAPRATRAPVASPAALGGTATASPAPA) form a disordered region. The segment covering 707-731 (APRATRAPVASPAALGGTATASPAP) has biased composition (low complexity). Residue Ser717 is modified to Phosphoserine. Residue Thr724 is modified to Phosphothreonine. Residue Ser728 is modified to Phosphoserine. C2H2-type zinc fingers lie at residues 737-759 (LECSECKKLFSTETSLQVHRRIH), 765-787 (YPCPDCGKAFRQSTHLKDHRRLH), 793-815 (FACEVCGKAFAISMRLAEHRRIH), and 821-843 (YSCPDCGKSYRSFSNLWKHRKTH). An Asymmetric dimethylarginine modification is found at Arg831.

It belongs to the krueppel C2H2-type zinc-finger protein family.

Its subcellular location is the nucleus. Functionally, may be involved in transcriptional regulation. The chain is Zinc finger protein 574 (ZNF574) from Pongo abelii (Sumatran orangutan).